The chain runs to 216 residues: MOB kinase activator 1B (216 aa).

Position 2 is an N-acetylserine (serine 2). Threonine 12 and threonine 35 each carry phosphothreonine; by STK4/MST1. Zn(2+) contacts are provided by cysteine 79, cysteine 84, histidine 161, and histidine 166.

The protein belongs to the MOB1/phocein family. As to quaternary structure, binds STK38L. Interacts with LATS1 and LATS2. In terms of processing, phosphorylated by STK3/MST2 and STK4/MST1 and this phosphorylation enhances its binding to LATS1. Adrenal gland, bone marrow, brain, lung, placenta, prostate, salivary gland, skeletal muscle, testis, thymus, thyroid gland, uterus, colon with mucosa, fetal brain and fetal liver.

The protein resides in the cytoplasm. Its subcellular location is the nucleus. Functionally, activator of LATS1/2 in the Hippo signaling pathway which plays a pivotal role in organ size control and tumor suppression by restricting proliferation and promoting apoptosis. The core of this pathway is composed of a kinase cascade wherein STK3/MST2 and STK4/MST1, in complex with its regulatory protein SAV1, phosphorylates and activates LATS1/2 in complex with its regulatory protein MOB1, which in turn phosphorylates and inactivates YAP1 oncoprotein and WWTR1/TAZ. Phosphorylation of YAP1 by LATS1/2 inhibits its translocation into the nucleus to regulate cellular genes important for cell proliferation, cell death, and cell migration. Stimulates the kinase activity of STK38L. This is MOB kinase activator 1B from Homo sapiens (Human).